We begin with the raw amino-acid sequence, 406 residues long: [Pyruvate dehydrogenase (acetyl-transferring)] kinase isozyme 3, mitochondrial (406 aa).

The region spanning 131–362 is the Histidine kinase domain; that stretch reads IEYKEKFGFD…DAVIYLKALS (232 aa). 247-254 contributes to the ATP binding site; sequence ELFKNSMR. K278 is modified (N6-succinyllysine). ATP-binding positions include D287, 306–307, and 323–328; these read ST and GFGYGL. The disordered stretch occupies residues 383–406; that stretch reads TPEADDWSNPSSEPRDASKYKAKQ. Residues 395–406 are compositionally biased toward basic and acidic residues; the sequence is EPRDASKYKAKQ.

The protein belongs to the PDK/BCKDK protein kinase family. Homodimer. Interacts with the pyruvate dehydrogenase complex subunit DLAT, and is part of the multimeric pyruvate dehydrogenase complex that contains multiple copies of pyruvate dehydrogenase (E1), dihydrolipoamide acetyltransferase (DLAT, E2) and lipoamide dehydrogenase (DLD, E3). Expressed in heart, skeletal muscle, spinal cord, as well as fetal and adult brain.

It localises to the mitochondrion matrix. The catalysed reaction is L-seryl-[pyruvate dehydrogenase E1 alpha subunit] + ATP = O-phospho-L-seryl-[pyruvate dehydrogenase E1 alpha subunit] + ADP + H(+). Activated by interaction with DLAT. Inhibited by AZD7545, dichloroacetate and radicicol. Functionally, inhibits pyruvate dehydrogenase activity by phosphorylation of the E1 subunit PDHA1, and thereby regulates glucose metabolism and aerobic respiration. Can also phosphorylate PDHA2. Decreases glucose utilization and increases fat metabolism in response to prolonged fasting, and as adaptation to a high-fat diet. Plays a role in glucose homeostasis and in maintaining normal blood glucose levels in function of nutrient levels and under starvation. Plays a role in the generation of reactive oxygen species. In Homo sapiens (Human), this protein is [Pyruvate dehydrogenase (acetyl-transferring)] kinase isozyme 3, mitochondrial (PDK3).